Consider the following 597-residue polypeptide: Arginine--tRNA ligase (597 aa).

The 'HIGH' region signature appears at 125-135 (PNTNKPLHLGH).

It belongs to the class-I aminoacyl-tRNA synthetase family. In terms of assembly, monomer.

The protein localises to the cytoplasm. The enzyme catalyses tRNA(Arg) + L-arginine + ATP = L-arginyl-tRNA(Arg) + AMP + diphosphate. This is Arginine--tRNA ligase from Bacteroides fragilis (strain ATCC 25285 / DSM 2151 / CCUG 4856 / JCM 11019 / LMG 10263 / NCTC 9343 / Onslow / VPI 2553 / EN-2).